The following is a 945-amino-acid chain: UvrABC system protein A (945 aa).

An ATP-binding site is contributed by 31–38 (GLSGSGKS). A C4-type zinc finger spans residues 254-281 (CPVCGHSISELEPKLFSFNNPAGACPTC). ABC transporter domains follow at residues 310-587 (WDRR…PDSL) and 607-937 (RDKK…HFLK). ATP is bound at residue 640–647 (GVSGSGKS). The C4-type zinc finger occupies 740–766 (CEACQGDGVIKVEMHFLPDIYVPCDVC).

Belongs to the ABC transporter superfamily. UvrA family. Forms a heterotetramer with UvrB during the search for lesions.

The protein localises to the cytoplasm. The UvrABC repair system catalyzes the recognition and processing of DNA lesions. UvrA is an ATPase and a DNA-binding protein. A damage recognition complex composed of 2 UvrA and 2 UvrB subunits scans DNA for abnormalities. When the presence of a lesion has been verified by UvrB, the UvrA molecules dissociate. The polypeptide is UvrABC system protein A (Pseudomonas aeruginosa (strain ATCC 15692 / DSM 22644 / CIP 104116 / JCM 14847 / LMG 12228 / 1C / PRS 101 / PAO1)).